The primary structure comprises 582 residues: MLPDIEICRATPLAPIDTIAQKAGLHANEYESHGQHKAKVSLHCLERLANKPKGKFILVTAITPTPLGEGKTVTTIGLAQGLAKLNHSVMACIRQPSMGPIFGVKGGAAGGGYSQVAPMEELNLHLTGDIHAVTAAHNLAAAAIDARIYHEQRLGYADFERRTGMPALRIDPKQVIWKRVMDHNDRALRMVTVGRNEPGKNINGYEREDGFDISAASELMAILALASDLRDLRRRIGNVVLAYDLDGNPVTTEDLKVAGAMAVSMKEAIEPTLMQTLEGVPTLIHAGPFANIAHGNSSIIADEIATRLADYTVTEGGFGSDMGFEKACNIKAKASGKTPDCAVIVATLRGLKANSGLYDLRPGQAVPDALFAPDSAALQAGFANLKWHIDNVNQYGVPAVVAINRFPQDCAEELEQLVKLIEALPNRVSVAISEGFAKGGEGTKLLAEKVVEQCQHPTKFTPLYDSGIPLDEKLKAVAVKGYGAAEIALSDKAAQQLAKLQTQGFDHLAVCLAKTPLSISTDPAIKGAPRDFIVPIRELRLCAGAEFVYALCGSVMTMPGLPEKPSFMALDIDQHGNIVGLS.

65–72 (TPLGEGKT) contributes to the ATP binding site.

It belongs to the formate--tetrahydrofolate ligase family.

It carries out the reaction (6S)-5,6,7,8-tetrahydrofolate + formate + ATP = (6R)-10-formyltetrahydrofolate + ADP + phosphate. The protein operates within one-carbon metabolism; tetrahydrofolate interconversion. This is Formate--tetrahydrofolate ligase from Vibrio cholerae serotype O1 (strain ATCC 39315 / El Tor Inaba N16961).